The sequence spans 97 residues: Protein RnfH (97 aa).

This sequence belongs to the UPF0125 (RnfH) family.

This chain is Protein RnfH, found in Aliivibrio salmonicida (strain LFI1238) (Vibrio salmonicida (strain LFI1238)).